Consider the following 375-residue polypeptide: Pectate lyase 1 (375 aa).

Residues 1-21 (MASCTLLAVLVFLCAIVSCFS) form the signal peptide. The cysteines at positions 28 and 45 are disulfide-linked. The N-linked (GlcNAc...) asparagine glycan is linked to N110. A disulfide bridge connects residues C128 and C147. The N-linked (GlcNAc...) asparagine glycan is linked to N148. D170 contributes to the Ca(2+) binding site. N178 is a glycosylation site (N-linked (GlcNAc...) asparagine). The Ca(2+) site is built by D194 and D198. R250 is an active-site residue. N-linked (GlcNAc...) asparagine glycosylation is present at N293. A disulfide bridge connects residues C306 and C312. Residue N352 is glycosylated (N-linked (GlcNAc...) asparagine).

The protein belongs to the polysaccharide lyase 1 family. Amb a subfamily. Requires Ca(2+) as cofactor.

The enzyme catalyses Eliminative cleavage of (1-&gt;4)-alpha-D-galacturonan to give oligosaccharides with 4-deoxy-alpha-D-galact-4-enuronosyl groups at their non-reducing ends.. The protein operates within glycan metabolism; pectin degradation; 2-dehydro-3-deoxy-D-gluconate from pectin: step 2/5. Its function is as follows. Has pectate lyase activity. The sequence is that of Pectate lyase 1 from Chamaecyparis obtusa (Hinoki false-cypress).